The chain runs to 320 residues: Phospho-N-acetylmuramoyl-pentapeptide-transferase (320 aa).

10 consecutive transmembrane segments (helical) span residues Ile7–Phe27, Gly50–Phe70, Ile77–Ile97, Leu113–Ser133, Trp148–Thr168, Gly173–Ser193, Met198–Asn216, Val221–Val241, Val247–Val267, and Val297–Gln317.

The protein belongs to the glycosyltransferase 4 family. MraY subfamily. The cofactor is Mg(2+).

Its subcellular location is the cell membrane. It carries out the reaction UDP-N-acetyl-alpha-D-muramoyl-L-alanyl-gamma-D-glutamyl-meso-2,6-diaminopimeloyl-D-alanyl-D-alanine + di-trans,octa-cis-undecaprenyl phosphate = di-trans,octa-cis-undecaprenyl diphospho-N-acetyl-alpha-D-muramoyl-L-alanyl-D-glutamyl-meso-2,6-diaminopimeloyl-D-alanyl-D-alanine + UMP. The protein operates within cell wall biogenesis; peptidoglycan biosynthesis. In terms of biological role, catalyzes the initial step of the lipid cycle reactions in the biosynthesis of the cell wall peptidoglycan: transfers peptidoglycan precursor phospho-MurNAc-pentapeptide from UDP-MurNAc-pentapeptide onto the lipid carrier undecaprenyl phosphate, yielding undecaprenyl-pyrophosphoryl-MurNAc-pentapeptide, known as lipid I. This chain is Phospho-N-acetylmuramoyl-pentapeptide-transferase, found in Caldicellulosiruptor bescii (strain ATCC BAA-1888 / DSM 6725 / KCTC 15123 / Z-1320) (Anaerocellum thermophilum).